The sequence spans 250 residues: Probable transcriptional regulatory protein Mmc1_0479 (250 aa).

Belongs to the TACO1 family.

The protein localises to the cytoplasm. This chain is Probable transcriptional regulatory protein Mmc1_0479, found in Magnetococcus marinus (strain ATCC BAA-1437 / JCM 17883 / MC-1).